The chain runs to 722 residues: MYRYFATTARGLEPALAAELKRMGAKSVRPASAGVGFEGDLEIGLRACLWSRVATRIILSLKKIDVSTPEALYASVLEIPWEDHLDAEGTLSVDCIGTNDTIRHTNFGGQKLKDAVVDRIRDKKGSRPSVARERPDLRINLGIRGNEGRVGIDLSGEGLHRRGYRLRTGDAPLKENLAAALLYFAGWEEQARLGAPFVDPMCGSGTLPIEAAMMAGDIAPGSLRRYFGFRRWRGASGIAELWQRLADESIERQNQAKMPIIEAGDSDANMVHIAQANIEEAELEGHIRLHQRDVAAWQKGADWPDRPGVLVTNPPYGERLGEVVELKGLFAKLGMLLNGPLLGWRSGVLMGDVLWQSAMGLPQQGQRMDLNNGPIPCAYILHGTEPKPQAAKGAPAPKPGLQQGVVSPENAQMFANRLKKNQKRLKKWVTRENVRCYRLYDADMPEYALAVDRYEEWVVVQEYQAPSSIPDADAHRRLQDACSVLPEVLGVPPERVVVKQRKRQKGYNQYDKMANRGQKVLVAEQGLNFEVNLTDYLDTGLFPDHAPMRRRIQQEAANRRFLNLFCYTGTATVHAAAGGALTTTSVDLSNTYLEWAQRNMELNGFKGEHQHRFIKANCMQWIATTDQTFDLIFLDPPTFSNSKSMLESFDIQRDQVTLIGGVARLLNPDGVLYFSTNRKKFKLEQDLLSAQNLHMEEITQQTLDPDFHREPPIHRCWRITCA.

The 112-residue stretch at 43–154 (IGLRACLWSR…GNEGRVGIDL (112 aa)) folds into the THUMP domain.

This sequence belongs to the methyltransferase superfamily. RlmKL family.

Its subcellular location is the cytoplasm. The enzyme catalyses guanosine(2445) in 23S rRNA + S-adenosyl-L-methionine = N(2)-methylguanosine(2445) in 23S rRNA + S-adenosyl-L-homocysteine + H(+). It catalyses the reaction guanosine(2069) in 23S rRNA + S-adenosyl-L-methionine = N(2)-methylguanosine(2069) in 23S rRNA + S-adenosyl-L-homocysteine + H(+). In terms of biological role, specifically methylates the guanine in position 2445 (m2G2445) and the guanine in position 2069 (m7G2069) of 23S rRNA. The polypeptide is Ribosomal RNA large subunit methyltransferase K/L (Magnetococcus marinus (strain ATCC BAA-1437 / JCM 17883 / MC-1)).